A 500-amino-acid polypeptide reads, in one-letter code: Glycerol kinase (500 aa).

ADP is bound at residue Thr-14. ATP is bound by residues Thr-14, Thr-15, and Ser-16. Thr-14 is a binding site for sn-glycerol 3-phosphate. Residue Arg-18 coordinates ADP. Sn-glycerol 3-phosphate is bound by residues Arg-84, Glu-85, and Tyr-136. Glycerol contacts are provided by Arg-84, Glu-85, and Tyr-136. At His-232 the chain carries Phosphohistidine; by HPr. Asp-246 is a binding site for sn-glycerol 3-phosphate. Residues Asp-246 and Gln-247 each contribute to the glycerol site. 2 residues coordinate ADP: Thr-268 and Gly-311. ATP-binding residues include Thr-268, Gly-311, Gln-315, and Gly-412. Residues Gly-412 and Asn-416 each contribute to the ADP site.

This sequence belongs to the FGGY kinase family. Homotetramer and homodimer (in equilibrium). The phosphoenolpyruvate-dependent sugar phosphotransferase system (PTS), including enzyme I, and histidine-containing protein (HPr) are required for the phosphorylation, which leads to the activation of the enzyme.

The catalysed reaction is glycerol + ATP = sn-glycerol 3-phosphate + ADP + H(+). The protein operates within polyol metabolism; glycerol degradation via glycerol kinase pathway; sn-glycerol 3-phosphate from glycerol: step 1/1. Activated by phosphorylation and inhibited by fructose 1,6-bisphosphate (FBP). In terms of biological role, key enzyme in the regulation of glycerol uptake and metabolism. Catalyzes the phosphorylation of glycerol to yield sn-glycerol 3-phosphate. In Streptococcus uberis (strain ATCC BAA-854 / 0140J), this protein is Glycerol kinase.